Reading from the N-terminus, the 156-residue chain is Aspartate 1-decarboxylase (156 aa).

The active-site Schiff-base intermediate with substrate; via pyruvic acid is the serine 26. Serine 26 carries the post-translational modification Pyruvic acid (Ser). Threonine 58 is a binding site for substrate. Tyrosine 59 (proton donor) is an active-site residue. Glycine 74 to alanine 76 contributes to the substrate binding site.

The protein belongs to the PanD family. In terms of assembly, heterooctamer of four alpha and four beta subunits. Requires pyruvate as cofactor. Is synthesized initially as an inactive proenzyme, which is activated by self-cleavage at a specific serine bond to produce a beta-subunit with a hydroxyl group at its C-terminus and an alpha-subunit with a pyruvoyl group at its N-terminus.

The protein localises to the cytoplasm. The catalysed reaction is L-aspartate + H(+) = beta-alanine + CO2. It participates in cofactor biosynthesis; (R)-pantothenate biosynthesis; beta-alanine from L-aspartate: step 1/1. Functionally, catalyzes the pyruvoyl-dependent decarboxylation of aspartate to produce beta-alanine. In Gloeothece citriformis (strain PCC 7424) (Cyanothece sp. (strain PCC 7424)), this protein is Aspartate 1-decarboxylase.